Reading from the N-terminus, the 309-residue chain is Ribonuclease Z (309 aa).

Zn(2+) is bound by residues H63, H65, D67, H68, H145, D216, and H274. The Proton acceptor role is filled by D67.

It belongs to the RNase Z family. As to quaternary structure, homodimer. Requires Zn(2+) as cofactor.

The catalysed reaction is Endonucleolytic cleavage of RNA, removing extra 3' nucleotides from tRNA precursor, generating 3' termini of tRNAs. A 3'-hydroxy group is left at the tRNA terminus and a 5'-phosphoryl group is left at the trailer molecule.. In terms of biological role, zinc phosphodiesterase, which displays some tRNA 3'-processing endonuclease activity. Probably involved in tRNA maturation, by removing a 3'-trailer from precursor tRNA. The chain is Ribonuclease Z from Streptococcus sanguinis (strain SK36).